A 336-amino-acid polypeptide reads, in one-letter code: Izumo sperm-egg fusion protein 1 (336 aa).

Positions 1–16 are cleaved as a signal peptide; sequence MTLPILLGWFLTLCSS. An Ig-like C2-type domain is found at 158 to 247; it reads PPLDCGEHHL…LKDQKGTALS (90 aa). Cysteines 179 and 236 form a disulfide. A helical membrane pass occupies residues 287 to 307; the sequence is SFLTVLILLTVLSITGSLIII.

The protein belongs to the Izumo family. Forms a complex with tmem81 and spaca6 on spermatocyte cell membrane. The complex binds to oocyte protein bncr. Expressed in sperm.

The protein localises to the cell membrane. It localises to the cytoplasmic vesicle. The protein resides in the secretory vesicle. It is found in the acrosome membrane. In terms of biological role, essential sperm cell-surface protein required for fertilization by acting as a ligand for bncr receptor on egg. The interaction of the complex izumo1:spaca6:tmemt81 with bncr is a necessary adhesion event between sperm and egg that is required for fertilization. This Danio rerio (Zebrafish) protein is Izumo sperm-egg fusion protein 1.